Here is a 183-residue protein sequence, read N- to C-terminus: Myelin-associated oligodendrocyte basic protein (183 aa).

Residues 68–183 are disordered; sequence TRTSRRAKSP…GSPVKASRFW (116 aa). Residues 69–78 are compositionally biased toward basic residues; it reads RTSRRAKSPQ. Over residues 79–96 the composition is skewed to low complexity; it reads RPKQQPAAPPAVVRAPAK. A run of 4 repeats spans residues 97-106, 107-116, 117-126, and 127-136. The 4 X 10 AA tandem repeats of P-R-S-P-P-R-S-E-R-Q stretch occupies residues 97–136; that stretch reads PRSPPRSERQPRSPPRSERQPRSPPRSERQPRSPPRSERQ. 2 positions are modified to phosphoserine: serine 99 and serine 109. Basic and acidic residues predominate over residues 101–143; that stretch reads PRSERQPRSPPRSERQPRSPPRSERQPRSPPRSERQPRPRPEV. Positions 151-164 are enriched in low complexity; it reads RPPQKSKQQPRSSP.

Its subcellular location is the cytoplasm. It localises to the perinuclear region. Functionally, may play a role in compacting or stabilizing the myelin sheath, possibly by binding the negatively charged acidic phospholipids of the cytoplasmic membrane. This is Myelin-associated oligodendrocyte basic protein (MOBP) from Homo sapiens (Human).